Here is a 184-residue protein sequence, read N- to C-terminus: Large ribosomal subunit protein uL5 (184 aa).

This sequence belongs to the universal ribosomal protein uL5 family. In terms of assembly, part of the 50S ribosomal subunit; part of the 5S rRNA/L5/L18/L25 subcomplex. Contacts the 5S rRNA and the P site tRNA. Forms a bridge to the 30S subunit in the 70S ribosome.

This is one of the proteins that bind and probably mediate the attachment of the 5S RNA into the large ribosomal subunit, where it forms part of the central protuberance. In the 70S ribosome it contacts protein S13 of the 30S subunit (bridge B1b), connecting the 2 subunits; this bridge is implicated in subunit movement. Contacts the P site tRNA; the 5S rRNA and some of its associated proteins might help stabilize positioning of ribosome-bound tRNAs. This is Large ribosomal subunit protein uL5 from Corynebacterium kroppenstedtii (strain DSM 44385 / JCM 11950 / CIP 105744 / CCUG 35717).